Consider the following 1150-residue polypeptide: Solute carrier family 12 member 6 (1150 aa).

Residues 1-135 are Cytoplasmic-facing; that stretch reads MHPPETTTKM…DEYFDKNLAL (135 aa). The interval 20–66 is disordered; sequence TKIDDIPGLSDTSPDLSSRSSSRVRFSSRESVPETSRSEPMSEMSGA. The span at 28–45 shows a compositional bias: low complexity; the sequence is LSDTSPDLSSRSSSRVRF. 2 positions are modified to phosphoserine: Ser32 and Ser120. The chain crosses the membrane as a discontinuously helical span at residues 136–158; sequence FEEEMDTRPKVSSLLNRMANYTN. K(+) contacts are provided by Ser147 and Ser148. Residue Ser148 is modified to Phosphoserine. Asn151 is a chloride binding site. Residues 159 to 165 lie on the Extracellular side of the membrane; that stretch reads LTQGAKE. Residues 161–181 are disordered; that stretch reads QGAKEHEEAENITEGKKKPTK. The span at 163–177 shows a compositional bias: basic and acidic residues; that stretch reads AKEHEEAENITEGKK. The chain crosses the membrane as a helical span at residues 166–188; that stretch reads HEEAENITEGKKKPTKTPQMGTF. Residues 189-211 lie on the Cytoplasmic side of the membrane; sequence MGVYLPCLQNIFGVILFLRLTWV. The helical transmembrane segment at 212 to 245 threads the bilayer; it reads VGTAGVLQAFAIVLICCCCTMLTAISMSAIATNG. The Extracellular segment spans residues 246-263; it reads VVPAGGSYFMISRALGPE. 2 consecutive transmembrane segments (helical) span residues 264–287 and 288–316; these read FGGAVGLCFYLGTTFAAAMYILGA and IEIFLVYIVPRAAIFHSDDALKESAAMLN. The Extracellular portion of the chain corresponds to 317–433; sequence NMRVYGTAFL…FVHNNVTSIQ (117 aa). Cys375 and Cys390 are disulfide-bonded. Asn379, Asn398, Asn411, and Asn428 each carry an N-linked (GlcNAc...) asparagine glycan. Cys410 and Cys420 form a disulfide bridge. A helical membrane pass occupies residues 434-454; sequence GIPGLASGIITENLWSNYLPK. K(+)-binding residues include Ile443, Thr444, and Asn446. Residues Ile443 and Thr444 each contribute to the chloride site. The chloride site is built by Leu447 and Trp448. Topologically, residues 455–464 are cytoplasmic; it reads GEIIEKPSAK. Residues 465–487 form a helical membrane-spanning segment; that stretch reads SSDVLGSLNHEYVLVDITTSFTL. The Extracellular segment spans residues 488–518; that stretch reads LVGIFFPSVTGIMAGSNRSGDLKDAQKSIPI. A helical transmembrane segment spans residues 519–545; sequence GTILAILTTSFVYLSNVVLFGACIEGV. Over 546–568 the chain is Cytoplasmic; it reads VLRDKFGDAVKGNLVVGTLSWPS. Transmembrane regions (helical) follow at residues 569–589 and 590–612; these read PWVIVIGSFFSTCGAGLQSLT and GAPRLLQAIAKDNIIPFLRVFGH. A chloride-binding site is contributed by Ile603. Over 613–629 the chain is Cytoplasmic; sequence SKANGEPTWALLLTAAI. 2 helical membrane passes run 630-649 and 650-665; these read AELGILIASLDLVAPILSMF and FLMCYLFVNLACALQT. At 666–1150 the chain is on the cytoplasmic side; it reads LLRTPNWRPR…GGSEVITIYS (485 aa). Positions 682-691 are scissor helix; that stretch reads ALSFMGMSIC. Ser736 carries the post-translational modification Phosphoserine. The residue at position 778 (Thr778) is a Phosphothreonine. Residue Ser981 is modified to Phosphoserine. Residue Thr991 is modified to Phosphothreonine; by OXSR1 and STK39. Residues Ser1023, Ser1029, and Ser1032 each carry the phosphoserine modification. Position 1048 is a phosphothreonine; by OXSR1 and STK39 (Thr1048). Phosphotyrosine is present on Tyr1121. Residues 1133–1150 are interaction with CKB; sequence ERVLLVRGGGSEVITIYS.

Belongs to the SLC12A transporter family. K/Cl co-transporter subfamily. As to quaternary structure, homodimer; adopts a domain-swap conformation at the scissor helices connecting the transmembrane domain and C-terminal domain. Heterodimer with K-Cl cotransporter SLC12A5. Interacts (via C-terminus) with CKB; the interaction may be required for potassium-chloride cotransport activity. Phosphorylated, phosphorylation regulates transporter activity. Phosphorylated at Thr-991 and Thr-1048 by OXSR1/OSR1 and STK39/SPAK downstream of WNK kinases (WNK1, WNK2, WNK3 or WNK4), inhibiting the potassium-chloride cotransport activity. Post-translationally, N-glycosylated. As to expression, expressed in brain (at protein level). Highly expressed in heart, brain and kidney. Detected at lower levels in skeletal muscle, placenta, lung and pancreas. Detected in umbilical vein endothelial cells. In terms of tissue distribution, more abundant in kidney. Testis specific.

It localises to the cell membrane. The protein resides in the basolateral cell membrane. The enzyme catalyses K(+)(in) + chloride(in) = K(+)(out) + chloride(out). With respect to regulation, inhibited following phosphorylation by OXSR1/OSR1 and STK39/SPAK: phosphorylation takes place downstream of WNK kinases (WNK1, WNK2, WNK3 or WNK4) in response to hyperosmotic stress and subsequent cell shrinkage. Activated by N-ethylmaleimide (NEM). Inhibited by DIOA, bumetanide and furosemide. Functionally, mediates electroneutral potassium-chloride cotransport when activated by cell swelling. May contribute to cell volume homeostasis in single cells. Its function is as follows. Mediates electroneutral potassium-chloride cotransport when activated by cell swelling. May contribute to cell volume homeostasis in single cells. Mediates electroneutral potassium-chloride cotransport when activated by cell swelling. May contribute to cell volume homeostasis in single cells. This Homo sapiens (Human) protein is Solute carrier family 12 member 6.